Here is a 570-residue protein sequence, read N- to C-terminus: Serine/threonine-protein kinase STY17 (570 aa).

The segment at 112-145 (LNGNSGDVDPSDPAVNEDAQSSYNSRSLAPPTFG) is disordered. Over residues 129–145 (DAQSSYNSRSLAPPTFG) the composition is skewed to polar residues. The region spanning 180-260 (EITFSTIDRP…PCSKQKSITF (81 aa)) is the ACT domain. A Protein kinase domain is found at 292–545 (LKIEKKVACG…EIIEMLNQLI (254 aa)). ATP-binding positions include 298-306 (VACGSYGEL) and Lys-319. The active-site Proton acceptor is Asp-413. At Ser-441 the chain carries Phosphoserine. The residue at position 445 (Thr-445) is a Phosphothreonine.

Belongs to the protein kinase superfamily. Ser/Thr protein kinase family. Autophosphorylated on serine and threonine residues. Autophosphorylated at Thr-445.

The protein resides in the cytoplasm. The protein localises to the cytosol. It carries out the reaction L-seryl-[protein] + ATP = O-phospho-L-seryl-[protein] + ADP + H(+). The catalysed reaction is L-threonyl-[protein] + ATP = O-phospho-L-threonyl-[protein] + ADP + H(+). With respect to regulation, activated by autophosphorylation at Thr-445. In terms of biological role, serine/threonine protein kinase that specifically phosphorylates chloroplast precursor proteins in the cytosol within the cleavable presequences (transit peptides). May be part of a cytosolic regulatory network involved in chloroplast protein import. Does not phosphorylate mitochondrion precursor proteins. Specific for ATP and does not utilize other NTPs. Plays a role in chloroplast biogenesis and differentiation in cotyledons, possibly through phosphorylation of chloroplast preproteins. In Arabidopsis thaliana (Mouse-ear cress), this protein is Serine/threonine-protein kinase STY17.